Consider the following 899-residue polypeptide: Protein translocase subunit SecA (899 aa).

ATP-binding positions include glutamine 87, 105–109 (GEGKT), and aspartate 516. Zn(2+)-binding residues include cysteine 884, cysteine 886, cysteine 895, and histidine 896.

It belongs to the SecA family. In terms of assembly, monomer and homodimer. Part of the essential Sec protein translocation apparatus which comprises SecA, SecYEG and auxiliary proteins SecDF. Other proteins may also be involved. The cofactor is Zn(2+).

It is found in the cell inner membrane. The protein localises to the cytoplasm. The catalysed reaction is ATP + H2O + cellular proteinSide 1 = ADP + phosphate + cellular proteinSide 2.. Functionally, part of the Sec protein translocase complex. Interacts with the SecYEG preprotein conducting channel. Has a central role in coupling the hydrolysis of ATP to the transfer of proteins into and across the cell membrane, serving as an ATP-driven molecular motor driving the stepwise translocation of polypeptide chains across the membrane. This Borreliella burgdorferi (strain ZS7) (Borrelia burgdorferi) protein is Protein translocase subunit SecA.